A 109-amino-acid polypeptide reads, in one-letter code: U26-theraphotoxin-Cg1b (109 aa).

Residues 1-18 form the signal peptide; the sequence is MNTIIPLLLLSLLITVYA. The propeptide occupies 19–67; it reads YALEDGNKEEMQDIAESEFEASNEMLQLAHLLEADRAETEEDRNSRQKR. 3 disulfide bridges follow: C68–C83, C75–C88, and C82–C103.

This sequence belongs to the neurotoxin 14 (magi-1) family. 07 (Jztx-56) subfamily. Expressed by the venom gland.

It localises to the secreted. Functionally, probable ion channel inhibitor. The protein is U26-theraphotoxin-Cg1b of Chilobrachys guangxiensis (Chinese earth tiger tarantula).